Reading from the N-terminus, the 952-residue chain is Chaperone protein ClpC2, chloroplastic (952 aa).

The transit peptide at M1–Q45 directs the protein to the chloroplast. The Clp R domain occupies F115 to E257. Repeat stretches follow at residues F118–G183 and F193–E257. Positions L278 to P525 are i. Residue G323–T330 participates in ATP binding. Residues E532 to E567 form the UVR domain. The segment at V592–S783 is II. G666–S673 is an ATP binding site.

Belongs to the ClpA/ClpB family. ClpC subfamily. As to quaternary structure, homodimer and homohexamer. Hexamerization upon addition of ATP. Interacts with CLPT1. Interacts with CLPS1. Stably associated with the import machinery. Interacts with CLPF. Mg(2+) serves as cofactor. As to expression, expressed at low levels in roots and inflorescences. Expressed at very low levels in rosette leaves. Expressed in photosynthetic green tissues with high levels in young, developing leaf tissues.

The protein resides in the plastid. The protein localises to the chloroplast stroma. It localises to the chloroplast membrane. It catalyses the reaction ATP + H2O = ADP + phosphate + H(+). In terms of biological role, molecular chaperone. May act as a suppressor of FtsH-mediated thylakoid membrane biogenesis and may enhance photoinhibition. Seems not involved in chloroplastic protein import. Probable component of the TIC-associated stromal import motor involved in inner membrane translocation. Has an ATPase activity, but no ADPase activity. Interacts with transit peptides with a positional preference. Localization of the signal sequence at the N-terminal end of a protein seems mandatory for interaction to take place. This chain is Chaperone protein ClpC2, chloroplastic, found in Arabidopsis thaliana (Mouse-ear cress).